The primary structure comprises 226 residues: PKHD-type hydroxylase mma_3620 (226 aa).

The Fe2OG dioxygenase domain occupies 78 to 178 (RYMPPLFNRY…RVCSFFWLQS (101 aa)). 3 residues coordinate Fe cation: His96, Asp98, and His159. 2-oxoglutarate is bound at residue Arg169.

The cofactor is Fe(2+). L-ascorbate is required as a cofactor.

The polypeptide is PKHD-type hydroxylase mma_3620 (Janthinobacterium sp. (strain Marseille) (Minibacterium massiliensis)).